Reading from the N-terminus, the 373-residue chain is 3 beta-hydroxysteroid dehydrogenase/Delta 5--&gt;4-isomerase type 2 (373 aa).

Tyr-155 (proton acceptor) is an active-site residue. Lys-159 provides a ligand contact to NAD(+). A helical transmembrane segment spans residues 288 to 308 (VALLYWLGFLLELVNFLLRPV).

It belongs to the 3-beta-HSD family. As to expression, high levels in adrenal gland, kidney and male liver. Low levels in female liver.

Its subcellular location is the endoplasmic reticulum membrane. The protein resides in the mitochondrion membrane. It carries out the reaction a 3beta-hydroxy-Delta(5)-steroid + NAD(+) = a 3-oxo-Delta(5)-steroid + NADH + H(+). The catalysed reaction is a 3-oxo-Delta(5)-steroid = a 3-oxo-Delta(4)-steroid. It catalyses the reaction pregnenolone + NAD(+) = pregn-5-ene-3,20-dione + NADH + H(+). The enzyme catalyses pregn-5-ene-3,20-dione = progesterone. It carries out the reaction 3beta-hydroxyandrost-5-en-17-one + NAD(+) = androst-5-ene-3,17-dione + NADH + H(+). The catalysed reaction is androst-5-ene-3,17-dione = androst-4-ene-3,17-dione. It functions in the pathway lipid metabolism; steroid biosynthesis. Functionally, 3-beta-HSD is a bifunctional enzyme, that catalyzes the oxidative conversion of Delta(5)-ene-3-beta-hydroxy steroid, and the oxidative conversion of ketosteroids. The 3-beta-HSD enzymatic system plays a crucial role in the biosynthesis of all classes of hormonal steroids. The polypeptide is 3 beta-hydroxysteroid dehydrogenase/Delta 5--&gt;4-isomerase type 2 (HSD3B2) (Mesocricetus auratus (Golden hamster)).